Here is a 99-residue protein sequence, read N- to C-terminus: Bacterial microcompartment shell vertex protein EutN (99 aa).

Residues 5-87 (MKLAVVTGQI…VDLCVIGIVD (83 aa)) form the BMV domain.

It belongs to the CcmL/EutN family. As to quaternary structure, homopentamer with a small central pore.

It is found in the bacterial microcompartment. Its pathway is amine and polyamine degradation; ethanolamine degradation. Probably forms vertices in the bacterial microcompartment (BMC) shell dedicated to ethanolamine degradation. Expression of eutK, eutL, eutM, eutN, eutS (eutSMNLK) in E.coli leads to formation of a single BMC. Coexpression of eutQ with eutSMNLK permits E.coli to make cells with more than one mobile BMC, as is usual in vivo. It may be involved in transporting positively charged molecules into and out of the BMC. In terms of biological role, the ethanolamine (EA) catabolic bacterial microcompartment (BMC) probably concentrates low levels of ethanolamine catabolic enzymes, concentrates volatile reaction intermediates, keeps the level of toxic acetaldehyde low, generates enough acetyl-CoA to support cell growth, and maintains a pool of free coenzyme A (CoA) and NAD. Functionally, expression of the eut operon allows this bacteria to use ethanolamine (EA) as a carbon, nitrogen and energy source. It relies on cobalamin (vitamin B12) both as a cofactor for the ethanolamine ammonia-lyase (EAL) activity and to induce the operon. EA enhances bacterial survival in macrophages in a concentration-dependent manner, suggesting it is an important nutrient during infection. This is Bacterial microcompartment shell vertex protein EutN from Salmonella typhimurium (strain LT2 / SGSC1412 / ATCC 700720).